Here is a 115-residue protein sequence, read N- to C-terminus: Protachykinin-1 (115 aa).

The N-terminal stretch at 1 to 19 (MKILVALAVLALVSTQLFA) is a signal peptide. Positions 20–56 (EDIRANDDLNYWSDWSDSDQIKEELPEPFEHLLQRIA) are excised as a propeptide. 2 positions are modified to methionine amide: Met68 and Met92.

The protein belongs to the tachykinin family. In terms of processing, the substance P form is cleaved at Pro-59 by the prolyl endopeptidase FAP (seprase) activity (in vitro). Substance P is also cleaved and degraded by Angiotensin-converting enzyme (ACE) and neprilysin (MME).

The protein resides in the secreted. In terms of biological role, tachykinins are active peptides which excite neurons, evoke behavioral responses, are potent vasodilators and secretagogues, and contract (directly or indirectly) many smooth muscles. This is Protachykinin-1 (TAC1) from Oryctolagus cuniculus (Rabbit).